A 398-amino-acid chain; its full sequence is Putative L-rhamnonate dehydratase (398 aa).

Substrate contacts are provided by His-29 and Arg-55. The Mg(2+) site is built by Asp-221, Glu-247, and Glu-274. His-324 (proton acceptor) is an active-site residue. Substrate is bound at residue Glu-344.

This sequence belongs to the mandelate racemase/muconate lactonizing enzyme family. RhamD subfamily. Mg(2+) is required as a cofactor.

It carries out the reaction L-rhamnonate = 2-dehydro-3-deoxy-L-rhamnonate + H2O. Functionally, catalyzes the dehydration of L-rhamnonate to 2-keto-3-deoxy-L-rhamnonate (KDR). The sequence is that of Putative L-rhamnonate dehydratase from Caldivirga maquilingensis (strain ATCC 700844 / DSM 13496 / JCM 10307 / IC-167).